A 395-amino-acid chain; its full sequence is 8-amino-7-oxononanoate synthase (395 aa).

R24 serves as a coordination point for substrate. Pyridoxal 5'-phosphate is bound at residue 111–112 (GF). H136 contributes to the substrate binding site. Pyridoxal 5'-phosphate-binding positions include S184, 209-212 (DDAH), and 240-243 (TLSK). K243 is modified (N6-(pyridoxal phosphate)lysine). Residue T357 coordinates substrate.

It belongs to the class-II pyridoxal-phosphate-dependent aminotransferase family. BioF subfamily. As to quaternary structure, homodimer. Pyridoxal 5'-phosphate serves as cofactor.

It carries out the reaction 6-carboxyhexanoyl-[ACP] + L-alanine + H(+) = (8S)-8-amino-7-oxononanoate + holo-[ACP] + CO2. The protein operates within cofactor biosynthesis; biotin biosynthesis. Functionally, catalyzes the decarboxylative condensation of pimeloyl-[acyl-carrier protein] and L-alanine to produce 8-amino-7-oxononanoate (AON), [acyl-carrier protein], and carbon dioxide. The polypeptide is 8-amino-7-oxononanoate synthase (Alkaliphilus metalliredigens (strain QYMF)).